An 84-amino-acid polypeptide reads, in one-letter code: MDNTNRLRRLHCHKQPKFTHSSQEVSSMKWEFINMTEQEEDLIFRMYRLVGDRWDLIARRVVGREAKEIERYWIMRNCDYFSHK.

Positions 36-73 constitute a Myb-like domain; sequence TEQEEDLIFRMYRLVGDRWDLIARRVVGREAKEIERYW.

In terms of tissue distribution, expressed in inflorescences and trichomes of rosette and cauline leaves.

The protein localises to the nucleus. Functionally, MYB-type transcription factor involved in trichome cell specification. Acts as a negative regulator of trichome patterning and formation by direct binding to the cis-acting regulatory elements of GL1, thus suppressing the expression of GL1. In Arabidopsis thaliana (Mouse-ear cress), this protein is MYB-like transcription factor TCL1 (TCL1).